The chain runs to 465 residues: A-type ATP synthase subunit B (465 aa).

Belongs to the ATPase alpha/beta chains family. As to quaternary structure, has multiple subunits with at least A(3), B(3), C, D, E, F, H, I and proteolipid K(x).

It localises to the cell membrane. Its function is as follows. Component of the A-type ATP synthase that produces ATP from ADP in the presence of a proton gradient across the membrane. The B chain is a regulatory subunit. The protein is A-type ATP synthase subunit B of Thermococcus kodakarensis (strain ATCC BAA-918 / JCM 12380 / KOD1) (Pyrococcus kodakaraensis (strain KOD1)).